Reading from the N-terminus, the 141-residue chain is MQLTSFTDYGLRALIYMASLPQGQMTSISQVTEVYGVSRNHMVKIINQLSRAGYVTAVRGKNGGIRLGKPAQSIRVGDVVRELEPLSLVNCSSDFCHITPACRLKQALSKAVQSFLMELDNYTLADLVEENQPLYKLLLVE.

The HTH rrf2-type domain maps to 2 to 129 (QLTSFTDYGL…DNYTLADLVE (128 aa)). A DNA-binding region (H-T-H motif) is located at residues 28–51 (ISQVTEVYGVSRNHMVKIINQLSR). Residues C91, C96, and C102 each coordinate [2Fe-2S] cluster.

[2Fe-2S] cluster is required as a cofactor.

Functionally, nitric oxide-sensitive repressor of genes involved in protecting the cell against nitrosative stress. May require iron for activity. The polypeptide is HTH-type transcriptional repressor NsrR (Enterobacter sp. (strain 638)).